The chain runs to 428 residues: Cyclic AMP-responsive element-binding protein 3-like protein 3-B (428 aa).

The Cytoplasmic segment spans residues 1–286 (MDHYSDQGGD…VMNGSNKPVQ (286 aa)). Low complexity predominate over residues 67 to 83 (VSGSPVWSPSPSDSGIS). The disordered stretch occupies residues 67 to 104 (VSGSPVWSPSPSDSGISEDPHSDHIDSPPPNASPPMEP). The span at 93–103 (SPPPNASPPME) shows a compositional bias: pro residues. Residues 210–273 (ILKKIRRKIR…ISLMEQLRRL (64 aa)) form the bZIP domain. The tract at residues 212 to 241 (KKIRRKIRNKQSAQESRKKKKEYIDGLESR) is basic motif. The leucine-zipper stretch occupies residues 252–273 (LQRKVFQLEKCNISLMEQLRRL). Residues 287-303 (AGTCVLVLLLSFTLILL) traverse the membrane as a helical; Signal-anchor for type II membrane protein segment. The Lumenal portion of the chain corresponds to 304–428 (PNLKPFTDTK…SRRSPHADDM (125 aa)). Residues 381–428 (TEYDPESHNHSFDQHDEHHHGDPITGHVATVTLNPRRGSRRSPHADDM) are disordered. Residues 385-402 (PESHNHSFDQHDEHHHGD) are compositionally biased toward basic and acidic residues. An N-linked (GlcNAc...) asparagine glycan is attached at Asn-389.

Belongs to the bZIP family. ATF subfamily. Binds DNA as a dimer. Post-translationally, controlled by regulated intramembrane proteolysis (RIP). A fragment containing the cytoplasmic transcription factor domain is released by proteolysis. The cleavage seems to be performed sequentially by site-1 and site-2 proteases.

It localises to the endoplasmic reticulum membrane. It is found in the nucleus. Functionally, transcriptional activator. Binds the cAMP response element (CRE). Activates transcription through box-B element and CRE. Seems to function synergistically with atf6. Regulates FGF21 transcription. The polypeptide is Cyclic AMP-responsive element-binding protein 3-like protein 3-B (creb3l3b) (Danio rerio (Zebrafish)).